The following is a 445-amino-acid chain: Na(+)-translocating NADH-quinone reductase subunit A (445 aa).

The protein belongs to the NqrA family. In terms of assembly, composed of six subunits; NqrA, NqrB, NqrC, NqrD, NqrE and NqrF.

The enzyme catalyses a ubiquinone + n Na(+)(in) + NADH + H(+) = a ubiquinol + n Na(+)(out) + NAD(+). Functionally, NQR complex catalyzes the reduction of ubiquinone-1 to ubiquinol by two successive reactions, coupled with the transport of Na(+) ions from the cytoplasm to the periplasm. NqrA to NqrE are probably involved in the second step, the conversion of ubisemiquinone to ubiquinol. The chain is Na(+)-translocating NADH-quinone reductase subunit A from Pseudomonas aeruginosa (strain UCBPP-PA14).